The sequence spans 118 residues: ATP synthase subunit c (118 aa).

Helical transmembrane passes span 34-54 and 88-108; these read AIFA…GAVG and MAMA…LIFA.

This sequence belongs to the ATPase C chain family. As to quaternary structure, F-type ATPases have 2 components, F(1) - the catalytic core - and F(0) - the membrane proton channel. F(1) has five subunits: alpha(3), beta(3), gamma(1), delta(1), epsilon(1). F(0) has three main subunits: a(1), b(2) and c(10-14). The alpha and beta chains form an alternating ring which encloses part of the gamma chain. F(1) is attached to F(0) by a central stalk formed by the gamma and epsilon chains, while a peripheral stalk is formed by the delta and b chains.

The protein localises to the cell inner membrane. In terms of biological role, f(1)F(0) ATP synthase produces ATP from ADP in the presence of a proton or sodium gradient. F-type ATPases consist of two structural domains, F(1) containing the extramembraneous catalytic core and F(0) containing the membrane proton channel, linked together by a central stalk and a peripheral stalk. During catalysis, ATP synthesis in the catalytic domain of F(1) is coupled via a rotary mechanism of the central stalk subunits to proton translocation. Functionally, key component of the F(0) channel; it plays a direct role in translocation across the membrane. A homomeric c-ring of between 10-14 subunits forms the central stalk rotor element with the F(1) delta and epsilon subunits. This is ATP synthase subunit c from Syntrophus aciditrophicus (strain SB).